Reading from the N-terminus, the 97-residue chain is Zinc metalloproteinase-disintegrin-like bothrojarin-4 (97 aa).

One can recognise a Disintegrin domain in the interval 4-90; the sequence is PPVCGNYFVE…DCPTDRFRRN (87 aa). The Ca(2+) site is built by Val-6, Asn-9, Phe-11, Glu-13, Glu-16, and Asp-19. 7 cysteine pairs are disulfide-bonded: Cys-7/Cys-36, Cys-18/Cys-31, Cys-20/Cys-26, Cys-30/Cys-53, Cys-44/Cys-50, Cys-49/Cys-75, and Cys-62/Cys-82. N-linked (GlcNAc...) asparagine glycosylation is present at Asn-32. Positions 68-70 match the D/ECD-tripeptide; atypical (KCD) motif; it reads KCD.

It belongs to the venom metalloproteinase (M12B) family. P-III subfamily. P-IIIa sub-subfamily. In terms of assembly, monomer. Zn(2+) is required as a cofactor. In terms of tissue distribution, expressed by the venom gland.

It localises to the secreted. In terms of biological role, the hemorrhagic metalloproteinase-disintegrin-like bothrojarin-1 is a potent inhibitor of collagen-induced platelet aggregation by blockage of alpha-2/beta-1 (ITGA2/ITGB1) integrin. It does not present any fibrinogen-clotting activity. The protein is Zinc metalloproteinase-disintegrin-like bothrojarin-4 of Bothrops jararaca (Jararaca).